Here is a 134-residue protein sequence, read N- to C-terminus: Probable glycine cleavage system H protein (134 aa).

In terms of domain architecture, Lipoyl-binding spans 29–110 (TVLVGISDYA…PYENWIAKLK (82 aa)). N6-lipoyllysine is present on K70.

This sequence belongs to the GcvH family. As to quaternary structure, the glycine cleavage system is composed of four proteins: P, T, L and H. It depends on (R)-lipoate as a cofactor.

The glycine cleavage system catalyzes the degradation of glycine. The H protein shuttles the methylamine group of glycine from the P protein to the T protein. In Thermococcus kodakarensis (strain ATCC BAA-918 / JCM 12380 / KOD1) (Pyrococcus kodakaraensis (strain KOD1)), this protein is Probable glycine cleavage system H protein.